A 201-amino-acid chain; its full sequence is 3-isopropylmalate dehydratase small subunit (201 aa).

Belongs to the LeuD family. LeuD type 1 subfamily. Heterodimer of LeuC and LeuD.

It carries out the reaction (2R,3S)-3-isopropylmalate = (2S)-2-isopropylmalate. It participates in amino-acid biosynthesis; L-leucine biosynthesis; L-leucine from 3-methyl-2-oxobutanoate: step 2/4. Its function is as follows. Catalyzes the isomerization between 2-isopropylmalate and 3-isopropylmalate, via the formation of 2-isopropylmaleate. This is 3-isopropylmalate dehydratase small subunit from Rhodopseudomonas palustris (strain HaA2).